Here is a 163-residue protein sequence, read N- to C-terminus: Globin CTT-V (163 aa).

A signal peptide spans 1–16 (MKFFAVLTLCIIGAIA). Residues 18–163 (PLTSDEANLV…YTVAFEVIPA (146 aa)) enclose the Globin domain. 2 residues coordinate heme b: His-76 and His-111.

It belongs to the globin family.

This chain is Globin CTT-V (CTT-V), found in Chironomus thummi piger (Midge).